Reading from the N-terminus, the 183-residue chain is Ribulose bisphosphate carboxylase small subunit, chloroplastic (183 aa).

The transit peptide at 1-59 (MASSMISSGTVATVSADRPAPAQARMVAPFNGLKSSSAFPVTRKSNDITSIASNGGRVQ) directs the protein to the chloroplast.

It belongs to the RuBisCO small chain family. As to quaternary structure, heterohexadecamer of 8 large and 8 small subunits.

The protein resides in the plastid. The protein localises to the chloroplast. Its function is as follows. RuBisCO catalyzes two reactions: the carboxylation of D-ribulose 1,5-bisphosphate, the primary event in carbon dioxide fixation, as well as the oxidative fragmentation of the pentose substrate. Both reactions occur simultaneously and in competition at the same active site. Although the small subunit is not catalytic it is essential for maximal activity. The protein is Ribulose bisphosphate carboxylase small subunit, chloroplastic of Pyrus pyrifolia (Chinese pear).